Reading from the N-terminus, the 256-residue chain is 2,3,4,5-tetrahydropyridine-2,6-dicarboxylate N-acetyltransferase (256 aa).

It belongs to the transferase hexapeptide repeat family. DapH subfamily.

The enzyme catalyses (S)-2,3,4,5-tetrahydrodipicolinate + acetyl-CoA + H2O = L-2-acetamido-6-oxoheptanedioate + CoA. It participates in amino-acid biosynthesis; L-lysine biosynthesis via DAP pathway; LL-2,6-diaminopimelate from (S)-tetrahydrodipicolinate (acetylase route): step 1/3. Catalyzes the transfer of an acetyl group from acetyl-CoA to tetrahydrodipicolinate. This is 2,3,4,5-tetrahydropyridine-2,6-dicarboxylate N-acetyltransferase from Lactococcus lactis subsp. cremoris (strain MG1363).